The following is a 240-amino-acid chain: Arylmalonate decarboxylase (240 aa).

The catalysed reaction is 2-aryl-2-methylmalonate + H(+) = 2-arylpropionate + CO2. The protein is Arylmalonate decarboxylase of Bordetella bronchiseptica (Alcaligenes bronchisepticus).